We begin with the raw amino-acid sequence, 142 residues long: Large ribosomal subunit protein uL11 (142 aa).

The protein belongs to the universal ribosomal protein uL11 family. Part of the ribosomal stalk of the 50S ribosomal subunit. Interacts with L10 and the large rRNA to form the base of the stalk. L10 forms an elongated spine to which L12 dimers bind in a sequential fashion forming a multimeric L10(L12)X complex. In terms of processing, one or more lysine residues are methylated.

In terms of biological role, forms part of the ribosomal stalk which helps the ribosome interact with GTP-bound translation factors. This chain is Large ribosomal subunit protein uL11, found in Hahella chejuensis (strain KCTC 2396).